The primary structure comprises 241 residues: UDP-2,3-diacylglucosamine hydrolase (241 aa).

Mn(2+)-binding residues include aspartate 8, histidine 10, aspartate 41, asparagine 79, and histidine 114. 79–80 contributes to the substrate binding site; sequence NR. Substrate is bound by residues aspartate 122, lysine 164, lysine 167, and histidine 195. 2 residues coordinate Mn(2+): histidine 195 and histidine 197.

Belongs to the LpxH family. It depends on Mn(2+) as a cofactor.

Its subcellular location is the cell inner membrane. The enzyme catalyses UDP-2-N,3-O-bis[(3R)-3-hydroxytetradecanoyl]-alpha-D-glucosamine + H2O = 2-N,3-O-bis[(3R)-3-hydroxytetradecanoyl]-alpha-D-glucosaminyl 1-phosphate + UMP + 2 H(+). It participates in glycolipid biosynthesis; lipid IV(A) biosynthesis; lipid IV(A) from (3R)-3-hydroxytetradecanoyl-[acyl-carrier-protein] and UDP-N-acetyl-alpha-D-glucosamine: step 4/6. In terms of biological role, hydrolyzes the pyrophosphate bond of UDP-2,3-diacylglucosamine to yield 2,3-diacylglucosamine 1-phosphate (lipid X) and UMP by catalyzing the attack of water at the alpha-P atom. Involved in the biosynthesis of lipid A, a phosphorylated glycolipid that anchors the lipopolysaccharide to the outer membrane of the cell. The chain is UDP-2,3-diacylglucosamine hydrolase from Aliivibrio fischeri (strain MJ11) (Vibrio fischeri).